A 59-amino-acid chain; its full sequence is Potassium channel toxin alpha-KTx 1.12 (59 aa).

An N-terminal signal peptide occupies residues 1 to 22 (MKILSVLLLALIICSIVGWSEA). At Gln23 the chain carries Pyrrolidone carboxylic acid. Intrachain disulfides connect Cys29–Cys50, Cys35–Cys55, and Cys39–Cys57. Residues 48 to 55 (GKCMNKKC) are interaction with Ca(2+)-activated K(+) channels.

Belongs to the short scorpion toxin superfamily. Potassium channel inhibitor family. Alpha-KTx 01 subfamily. Expressed by the venom gland.

Its subcellular location is the secreted. Potent selective inhibitor of high conductance (maxi-K), different medium and small conductance calcium-activated potassium channels (KCa1.1/KCNMA1 and others), as well as a voltage-dependent potassium channel (Kv1.3/KCNA3&gt;Kv1.2/KCNA2&gt;Kv1.6/KCNA3&gt;&gt;Shaker/Sh). It blocks channel activity by a simple bimolecular inhibition process. Its function is as follows. Has a pH-specific antimicrobial activity against bacteria (B.subtilis, E.coli and S.aureus) and the fungus C.albicans. In Leiurus hebraeus (Hebrew deathstalker scorpion), this protein is Potassium channel toxin alpha-KTx 1.12.